A 148-amino-acid polypeptide reads, in one-letter code: Nucleoside diphosphate kinase (148 aa).

Lysine 9, phenylalanine 57, arginine 85, threonine 91, arginine 102, and asparagine 112 together coordinate ATP. Threonine 91 carries the post-translational modification Phosphothreonine. Histidine 115 serves as the catalytic Pros-phosphohistidine intermediate. Phosphoserine is present on serine 122.

This sequence belongs to the NDK family. In terms of assembly, homotetramer. It depends on Mg(2+) as a cofactor.

The protein localises to the cytoplasm. The enzyme catalyses a 2'-deoxyribonucleoside 5'-diphosphate + ATP = a 2'-deoxyribonucleoside 5'-triphosphate + ADP. It carries out the reaction a ribonucleoside 5'-diphosphate + ATP = a ribonucleoside 5'-triphosphate + ADP. In terms of biological role, major role in the synthesis of nucleoside triphosphates other than ATP. The ATP gamma phosphate is transferred to the NDP beta phosphate via a ping-pong mechanism, using a phosphorylated active-site intermediate. This chain is Nucleoside diphosphate kinase, found in Bacillus anthracis.